The chain runs to 200 residues: RNA-binding protein with multiple splicing 2 (200 aa).

An RRM domain is found at 22-99 (RTLFVSGLPV…QTLRLEFAKA (78 aa)). The interval 32–42 (DIKPRELYLLF) is important for homodimerization.

As to quaternary structure, homodimer. As to expression, expressed in developing heart.

The protein localises to the cytoplasm. It is found in the nucleus. The protein resides in the stress granule. RNA-binding protein involved in the regulation of smooth muscle cell differentiation and proliferation in the gastrointestinal system. Binds NOG mRNA, the major inhibitor of the bone morphogenetic protein (BMP) pathway. Mediates an increase of NOG mRNA levels, thereby contributing to the negative regulation of BMP signaling pathway and promoting reversible dedifferentiation and proliferation of smooth muscle cells. Acts as a pre-mRNA alternative splicing regulator. Mediates ACTN1 and FLNB alternative splicing. Likely binds to mRNA tandem CAC trinucleotide or CA dinucleotide motifs. In Gallus gallus (Chicken), this protein is RNA-binding protein with multiple splicing 2.